Reading from the N-terminus, the 512-residue chain is 2,3-bisphosphoglycerate-independent phosphoglycerate mutase (512 aa).

Mn(2+)-binding residues include Asp-14 and Ser-64. The active-site Phosphoserine intermediate is Ser-64. Substrate is bound by residues His-125, 155–156, Arg-187, Arg-193, 259–262, and Lys-332; these read RD and RADR. The Mn(2+) site is built by Asp-399, His-403, Asp-440, His-441, and His-459.

Belongs to the BPG-independent phosphoglycerate mutase family. In terms of assembly, monomer. Mn(2+) is required as a cofactor.

The catalysed reaction is (2R)-2-phosphoglycerate = (2R)-3-phosphoglycerate. The protein operates within carbohydrate degradation; glycolysis; pyruvate from D-glyceraldehyde 3-phosphate: step 3/5. In terms of biological role, catalyzes the interconversion of 2-phosphoglycerate and 3-phosphoglycerate. This chain is 2,3-bisphosphoglycerate-independent phosphoglycerate mutase, found in Vesicomyosocius okutanii subsp. Calyptogena okutanii (strain HA).